Consider the following 331-residue polypeptide: Flagellar P-ring protein (331 aa).

Residues 1 to 25 (MKKRLAVLLVIVLTITFSFSVTTRI) form the signal peptide.

Belongs to the FlgI family. As to quaternary structure, the basal body constitutes a major portion of the flagellar organelle and consists of four rings (L,P,S, and M) mounted on a central rod.

The protein localises to the periplasm. It localises to the bacterial flagellum basal body. In terms of biological role, assembles around the rod to form the L-ring and probably protects the motor/basal body from shearing forces during rotation. The sequence is that of Flagellar P-ring protein from Thermotoga petrophila (strain ATCC BAA-488 / DSM 13995 / JCM 10881 / RKU-1).